A 607-amino-acid chain; its full sequence is UvrABC system protein C (607 aa).

The 79-residue stretch at 16 to 94 (GRPGVYRMFD…IKEWRPPYNI (79 aa)) folds into the GIY-YIG domain. A UVR domain is found at 203–238 (NALTDELSTAMEAAASTLDFEKAAELRDQISLLRRV).

This sequence belongs to the UvrC family. As to quaternary structure, interacts with UvrB in an incision complex.

Its subcellular location is the cytoplasm. Functionally, the UvrABC repair system catalyzes the recognition and processing of DNA lesions. UvrC both incises the 5' and 3' sides of the lesion. The N-terminal half is responsible for the 3' incision and the C-terminal half is responsible for the 5' incision. The polypeptide is UvrABC system protein C (Pseudomonas fluorescens (strain ATCC BAA-477 / NRRL B-23932 / Pf-5)).